The chain runs to 509 residues: uncharacterized protein (509 aa).

Positions 1–32 (MMLPKRNIIHFLRKRAIFIVAAFIALLTVDYS) are cleaved as a signal peptide.

It localises to the endoplasmic reticulum. This is an uncharacterized protein from Schizosaccharomyces pombe (strain 972 / ATCC 24843) (Fission yeast).